The chain runs to 128 residues: Small ribosomal subunit protein uS9 (128 aa).

Residues 106 to 128 are disordered; sequence SRKVERKKPGRPKARKKFQFSKR. Residues 109 to 128 are compositionally biased toward basic residues; that stretch reads VERKKPGRPKARKKFQFSKR.

This sequence belongs to the universal ribosomal protein uS9 family.

This Azobacteroides pseudotrichonymphae genomovar. CFP2 protein is Small ribosomal subunit protein uS9.